The following is a 20-amino-acid chain: Cytochrome c oxidase subunit 6A2, mitochondrial (20 aa).

The interval 1-20 is disordered; it reads ASGAKGDHGGAGASTXXLLT.

The protein belongs to the cytochrome c oxidase subunit 6A family. As to quaternary structure, component of the cytochrome c oxidase (complex IV, CIV), a multisubunit enzyme composed of 14 subunits. The complex is composed of a catalytic core of 3 subunits MT-CO1, MT-CO2 and MT-CO3, encoded in the mitochondrial DNA, and 11 supernumerary subunits COX4I, COX5A, COX5B, COX6A, COX6B, COX6C, COX7A, COX7B, COX7C, COX8 and NDUFA4, which are encoded in the nuclear genome. The complex exists as a monomer or a dimer and forms supercomplexes (SCs) in the inner mitochondrial membrane with NADH-ubiquinone oxidoreductase (complex I, CI) and ubiquinol-cytochrome c oxidoreductase (cytochrome b-c1 complex, complex III, CIII), resulting in different assemblies (supercomplex SCI(1)III(2)IV(1) and megacomplex MCI(2)III(2)IV(2)). Heart specific isoform.

The protein localises to the mitochondrion inner membrane. It participates in energy metabolism; oxidative phosphorylation. Component of the cytochrome c oxidase, the last enzyme in the mitochondrial electron transport chain which drives oxidative phosphorylation. The respiratory chain contains 3 multisubunit complexes succinate dehydrogenase (complex II, CII), ubiquinol-cytochrome c oxidoreductase (cytochrome b-c1 complex, complex III, CIII) and cytochrome c oxidase (complex IV, CIV), that cooperate to transfer electrons derived from NADH and succinate to molecular oxygen, creating an electrochemical gradient over the inner membrane that drives transmembrane transport and the ATP synthase. Cytochrome c oxidase is the component of the respiratory chain that catalyzes the reduction of oxygen to water. Electrons originating from reduced cytochrome c in the intermembrane space (IMS) are transferred via the dinuclear copper A center (CU(A)) of subunit 2 and heme A of subunit 1 to the active site in subunit 1, a binuclear center (BNC) formed by heme A3 and copper B (CU(B)). The BNC reduces molecular oxygen to 2 water molecules unsing 4 electrons from cytochrome c in the IMS and 4 protons from the mitochondrial matrix. Plays a role in the assembly and stabilization of complex IV. This Canis lupus familiaris (Dog) protein is Cytochrome c oxidase subunit 6A2, mitochondrial (COX6A2).